The primary structure comprises 936 residues: Protocadherin gamma-A10 (936 aa).

The first 32 residues, 1-32 (MAAQRNRSKESKDCSGLVLLCLFFGIPWEAGA), serve as a signal peptide directing secretion. 6 Cadherin domains span residues 33-137 (RQIS…APTF), 138-246 (QAEN…APVF), 247-351 (TLPE…SPEL), 352-456 (TITS…PPTF), 457-566 (SQVS…APEI), and 574-687 (DGST…SPAN). Residues 33–696 (RQISYSIPEE…NSETSDLTLY (664 aa)) are Extracellular-facing. The N-linked (GlcNAc...) asparagine glycan is linked to N51. 2 N-linked (GlcNAc...) asparagine glycosylation sites follow: N423 and N549. Residues 697–717 (LVVAVAAVSCVFLAFVIVLLA) form a helical membrane-spanning segment. Residues 718-936 (LRLRRWHKSR…KKKSGKKEKK (219 aa)) lie on the Cytoplasmic side of the membrane. Disordered stretches follow at residues 801–845 (SKFP…WPNN) and 906–936 (ATLT…KEKK). Positions 820–845 (WRFSQAQRPGTSGSQNGDDTGTWPNN) are enriched in polar residues. Residues 926 to 936 (NKKKSGKKEKK) are compositionally biased toward basic residues.

It localises to the cell membrane. Functionally, potential calcium-dependent cell-adhesion protein. May be involved in the establishment and maintenance of specific neuronal connections in the brain. This is Protocadherin gamma-A10 (PCDHGA10) from Pan troglodytes (Chimpanzee).